A 218-amino-acid chain; its full sequence is Adenylate kinase (218 aa).

10 to 15 (GAGKGT) lines the ATP pocket. Positions 30–59 (STGDMLRAAVKAGTPLGQQAKAVMDAGQLV) are NMP. AMP-binding positions include T31, R36, 57 to 59 (QLV), 85 to 88 (GFPR), and Q92. Residues 122-159 (GRRSHPASGRTYHVKFNPPKVEGQDDVTGEPLVQREDD) form an LID region. ATP contacts are provided by residues R123 and 132–133 (TY). A disordered region spans residues 127-151 (PASGRTYHVKFNPPKVEGQDDVTGE). AMP contacts are provided by R156 and R167. G203 contributes to the ATP binding site.

The protein belongs to the adenylate kinase family. Monomer.

It is found in the cytoplasm. It carries out the reaction AMP + ATP = 2 ADP. It participates in purine metabolism; AMP biosynthesis via salvage pathway; AMP from ADP: step 1/1. Its function is as follows. Catalyzes the reversible transfer of the terminal phosphate group between ATP and AMP. Plays an important role in cellular energy homeostasis and in adenine nucleotide metabolism. This Delftia acidovorans (strain DSM 14801 / SPH-1) protein is Adenylate kinase.